Reading from the N-terminus, the 420-residue chain is Synaptosomal-associated protein 47 (420 aa).

2 t-SNARE coiled-coil homology domains span residues 110–172 (AEAA…LTEL) and 357–419 (TSEP…MKKL). The disordered stretch occupies residues 338 to 357 (ATHCEPSSGSQEGRPLQLQT). The segment covering 342-357 (EPSSGSQEGRPLQLQT) has biased composition (polar residues).

It belongs to the SVAP1 family. In terms of assembly, forms a complex containing SNAP47, VAMP2 and STX1A. Associates with the BLOC-1 complex. Interacts with BLOC1S6.

Its subcellular location is the endomembrane system. The protein localises to the cytoplasm. It is found in the perinuclear region. Its function is as follows. May play a role in intracellular membrane fusion. The protein is Synaptosomal-associated protein 47 (SNAP47) of Bos taurus (Bovine).